A 157-amino-acid chain; its full sequence is Ribosomal RNA large subunit methyltransferase H (157 aa).

S-adenosyl-L-methionine is bound by residues leucine 74, glycine 106, and 125–130 (LSDMTL).

Belongs to the RNA methyltransferase RlmH family. Homodimer.

The protein resides in the cytoplasm. The enzyme catalyses pseudouridine(1915) in 23S rRNA + S-adenosyl-L-methionine = N(3)-methylpseudouridine(1915) in 23S rRNA + S-adenosyl-L-homocysteine + H(+). Functionally, specifically methylates the pseudouridine at position 1915 (m3Psi1915) in 23S rRNA. The polypeptide is Ribosomal RNA large subunit methyltransferase H (Desulfovibrio desulfuricans (strain ATCC 27774 / DSM 6949 / MB)).